The sequence spans 232 residues: Small ribosomal subunit protein uS3 (232 aa).

Residues 39-107 (VRQFLTSELK…PAQINIAEVR (69 aa)) form the KH type-2 domain. A disordered region spans residues 213 to 232 (AANAVEPKGDKPKKQRKGRK).

This sequence belongs to the universal ribosomal protein uS3 family. Part of the 30S ribosomal subunit. Forms a tight complex with proteins S10 and S14.

Its function is as follows. Binds the lower part of the 30S subunit head. Binds mRNA in the 70S ribosome, positioning it for translation. The polypeptide is Small ribosomal subunit protein uS3 (Vibrio parahaemolyticus serotype O3:K6 (strain RIMD 2210633)).